A 31-amino-acid polypeptide reads, in one-letter code: MSDIN-like toxin proprotein 4 (31 aa).

A propeptide spanning residues 1–10 is cleaved from the precursor; that stretch reads MSDINGTRLP. The cyclopeptide (Trp-Pro) cross-link spans 11-16; that stretch reads WLATCP. The propeptide occupies 17-31; sequence CVGEDVNPTLSRGER.

Belongs to the MSDIN fungal toxin family. Processed by the macrocyclase-peptidase enzyme POPB to yield a toxic cyclic hexapeptide. POPB first removes 10 residues from the N-terminus. Conformational trapping of the remaining peptide forces the enzyme to release this intermediate rather than proceed to macrocyclization. The enzyme rebinds the remaining peptide in a different conformation and catalyzes macrocyclization of the N-terminal 6 residues.

Probable toxin that belongs to the MSDIN-like toxin family responsible for a large number of food poisoning cases and deaths. The chain is MSDIN-like toxin proprotein 4 from Amanita phalloides (Death cap).